The chain runs to 428 residues: Glutamate-1-semialdehyde 2,1-aminomutase (428 aa).

The residue at position 265 (Lys-265) is an N6-(pyridoxal phosphate)lysine.

The protein belongs to the class-III pyridoxal-phosphate-dependent aminotransferase family. HemL subfamily. In terms of assembly, homodimer. It depends on pyridoxal 5'-phosphate as a cofactor.

The protein localises to the cytoplasm. It catalyses the reaction (S)-4-amino-5-oxopentanoate = 5-aminolevulinate. The protein operates within porphyrin-containing compound metabolism; protoporphyrin-IX biosynthesis; 5-aminolevulinate from L-glutamyl-tRNA(Glu): step 2/2. The sequence is that of Glutamate-1-semialdehyde 2,1-aminomutase from Aeromonas salmonicida (strain A449).